Reading from the N-terminus, the 37-residue chain is Large ribosomal subunit protein bL36 (37 aa).

It belongs to the bacterial ribosomal protein bL36 family.

The sequence is that of Large ribosomal subunit protein bL36 from Dictyoglomus thermophilum (strain ATCC 35947 / DSM 3960 / H-6-12).